A 299-amino-acid polypeptide reads, in one-letter code: Phosphoribosylaminoimidazole-succinocarboxamide synthase (299 aa).

It belongs to the SAICAR synthetase family.

The catalysed reaction is 5-amino-1-(5-phospho-D-ribosyl)imidazole-4-carboxylate + L-aspartate + ATP = (2S)-2-[5-amino-1-(5-phospho-beta-D-ribosyl)imidazole-4-carboxamido]succinate + ADP + phosphate + 2 H(+). Its pathway is purine metabolism; IMP biosynthesis via de novo pathway; 5-amino-1-(5-phospho-D-ribosyl)imidazole-4-carboxamide from 5-amino-1-(5-phospho-D-ribosyl)imidazole-4-carboxylate: step 1/2. This Desulfatibacillum aliphaticivorans protein is Phosphoribosylaminoimidazole-succinocarboxamide synthase.